The sequence spans 189 residues: Peptidyl-tRNA hydrolase (189 aa).

Position 14 (Y14) interacts with tRNA. The active-site Proton acceptor is H19. Residues F61, N63, and N109 each contribute to the tRNA site.

Belongs to the PTH family. Monomer.

It is found in the cytoplasm. It catalyses the reaction an N-acyl-L-alpha-aminoacyl-tRNA + H2O = an N-acyl-L-amino acid + a tRNA + H(+). Hydrolyzes ribosome-free peptidyl-tRNAs (with 1 or more amino acids incorporated), which drop off the ribosome during protein synthesis, or as a result of ribosome stalling. Its function is as follows. Catalyzes the release of premature peptidyl moieties from peptidyl-tRNA molecules trapped in stalled 50S ribosomal subunits, and thus maintains levels of free tRNAs and 50S ribosomes. The protein is Peptidyl-tRNA hydrolase of Sulfurovum sp. (strain NBC37-1).